A 439-amino-acid polypeptide reads, in one-letter code: CBL-interacting serine/threonine-protein kinase 20 (439 aa).

The region spanning 12-266 is the Protein kinase domain; the sequence is YELGRLLGQG…IEKIMENSWF (255 aa). ATP contacts are provided by residues 18–26 and Lys41; that span reads LGQGTFAKV. Asp134 acts as the Proton acceptor in catalysis. Residues 152–181 form an activation loop region; the sequence is DFGLSALRESKQQDGLLHTTCGTPAYVAPE. Position 156 is a phosphoserine (Ser156). The residue at position 170 (Thr170) is a Phosphothreonine. The region spanning 297–322 is the NAF domain; that stretch reads VKPMSYNAFDLISSLSQGFDLSGLFE. The segment at 326–356 is PPI; the sequence is RSESKFTTKKDAKEIVSKFEEIATSSERFNL.

This sequence belongs to the protein kinase superfamily. CAMK Ser/Thr protein kinase family. SNF1 subfamily. Mn(2+) is required as a cofactor. Autophosphorylated. As to expression, confined to mature leaves.

The enzyme catalyses L-seryl-[protein] + ATP = O-phospho-L-seryl-[protein] + ADP + H(+). It catalyses the reaction L-threonyl-[protein] + ATP = O-phospho-L-threonyl-[protein] + ADP + H(+). Its function is as follows. CIPK serine-threonine protein kinases interact with CBL proteins. Binding of a CBL protein to the regulatory NAF domain of CIPK protein lead to the activation of the kinase in a calcium-dependent manner. Required for the abscisic acid-mediated (ABA) signaling pathway involved in seed germination and growth elongation inhibition. The chain is CBL-interacting serine/threonine-protein kinase 20 (CIPK20) from Arabidopsis thaliana (Mouse-ear cress).